Here is a 215-residue protein sequence, read N- to C-terminus: Interleukin-12 subunit alpha (215 aa).

The first 22 residues, 1-22, serve as a signal peptide directing secretion; sequence MCQSRYLLFLATLALLNHLSLA. Intrachain disulfides connect C33–C106, C60–C192, and C81–C119. N89 carries an N-linked (GlcNAc...) asparagine glycan.

This sequence belongs to the IL-6 superfamily. Heterodimer with IL12B; disulfide-linked. This heterodimer is known as interleukin IL-12. Heterodimer with EBI3/IL27B; not disulfide-linked. This heterodimer is known as interleukin IL-35. Interacts with NBR1; this interaction promotes IL-12 secretion.

The protein resides in the secreted. Heterodimerizes with IL12B to form the IL-12 cytokine or with EBI3/IL27B to form the IL-35 cytokine. IL-12 is primarily produced by professional antigen-presenting cells (APCs) such as B-cells and dendritic cells (DCs) as well as macrophages and granulocytes and regulates T-cell and natural killer-cell responses, induces the production of interferon-gamma (IFN-gamma), favors the differentiation of T-helper 1 (Th1) cells and is an important link between innate resistance and adaptive immunity. Mechanistically, exerts its biological effects through a receptor composed of IL12R1 and IL12R2 subunits. Binding to the receptor results in the rapid tyrosine phosphorylation of a number of cellular substrates including the JAK family kinases TYK2 and JAK2. In turn, recruited STAT4 gets phosphorylated and translocates to the nucleus where it regulates cytokine/growth factor responsive genes. As part of IL-35, plays essential roles in maintaining the immune homeostasis of the liver microenvironment and also functions as an immune-suppressive cytokine. Mediates biological events through unconventional receptors composed of IL12RB2 and gp130/IL6ST heterodimers or homodimers. Signaling requires the transcription factors STAT1 and STAT4, which form a unique heterodimer that binds to distinct DNA sites. This Mus musculus (Mouse) protein is Interleukin-12 subunit alpha (Il12a).